The chain runs to 57 residues: Andropin (57 aa).

Residues 1–23 (MKYFVVLVVLALILAISVGPSDA) form the signal peptide.

Belongs to the andropin family. As to expression, ejaculatory duct of adult males.

The protein localises to the secreted. Male-specific peptide with moderate activity against Gram-positive bacteria. The sequence is that of Andropin (Anp) from Drosophila melanogaster (Fruit fly).